Reading from the N-terminus, the 519-residue chain is Acetylcholine receptor subunit gamma (519 aa).

The first 22 residues, 1 to 22 (MQGGQRPHLLLLLLAVCLGAQS), serve as a signal peptide directing secretion. Residues 23–240 (RNQEERLLAD…VVFYLLIQRK (218 aa)) lie on the Extracellular side of the membrane. 2 N-linked (GlcNAc...) asparagine glycosylation sites follow: asparagine 52 and asparagine 163. A disulfide bridge connects residues cysteine 150 and cysteine 164. The next 3 membrane-spanning stretches (helical) occupy residues 241–265 (PLFYVINIIAPCVLISSVAILIYFL), 274–292 (CTVATNVLLAQTVFLFLVA), and 308–329 (YLTFLMVVTILIVVNSVVVLNV). The Cytoplasmic portion of the chain corresponds to 330-476 (SLRSPHTHSM…WLLVGRVLDR (147 aa)). Residues 477-497 (VCFLAMLSLFICGTAGIFLMA) form a helical membrane-spanning segment.

Belongs to the ligand-gated ion channel (TC 1.A.9) family. Acetylcholine receptor (TC 1.A.9.1) subfamily. Gamma/CHRNG sub-subfamily. In terms of assembly, pentamer of two alpha chains, and one each of the beta, delta, and gamma (in immature muscle) or epsilon (in mature muscle) chains. As to expression, at least in myotubes of skeletal muscle.

The protein resides in the postsynaptic cell membrane. Its subcellular location is the cell membrane. It carries out the reaction K(+)(in) = K(+)(out). It catalyses the reaction Na(+)(in) = Na(+)(out). After binding acetylcholine, the AChR responds by an extensive change in conformation that affects all subunits and leads to opening of an ion-conducting channel across the plasma membrane. In Mus musculus (Mouse), this protein is Acetylcholine receptor subunit gamma (Chrng).